A 309-amino-acid polypeptide reads, in one-letter code: Putative pyridoxal kinase C6F6.11c (309 aa).

Substrate contacts are provided by S12 and Y123. Residues 182–183 (SS) and 209–221 (LIPV…RGTG) each bind ATP. D222 serves as a coordination point for substrate.

This sequence belongs to the pyridoxine kinase family. It depends on a divalent metal cation as a cofactor.

It localises to the cytoplasm. The protein localises to the nucleus. It catalyses the reaction pyridoxal + ATP = pyridoxal 5'-phosphate + ADP + H(+). Its function is as follows. Required for synthesis of pyridoxal-5-phosphate from vitamin B6. The chain is Putative pyridoxal kinase C6F6.11c from Schizosaccharomyces pombe (strain 972 / ATCC 24843) (Fission yeast).